Consider the following 673-residue polypeptide: UvrABC system protein B (673 aa).

In terms of domain architecture, Helicase ATP-binding spans 26–183 (EGLEDGLAHQ…RRLAELQYTR (158 aa)). An ATP-binding site is contributed by 39–46 (GVTGSGKT). Residues 92–115 (YYDYYQPEAYVPSSDTFIEKDASV) carry the Beta-hairpin motif. A Helicase C-terminal domain is found at 431-597 (QVDDLLSEIR…GLNKKVVDIL (167 aa)). A disordered region spans residues 608–627 (AKGRGKSRPIVEPDNVPMDM). The UVR domain occupies 633-668 (QQKIHELEGLMMQHAQNLEFEEAAQIRDQLHQLREL).

Belongs to the UvrB family. Forms a heterotetramer with UvrA during the search for lesions. Interacts with UvrC in an incision complex.

The protein resides in the cytoplasm. Functionally, the UvrABC repair system catalyzes the recognition and processing of DNA lesions. A damage recognition complex composed of 2 UvrA and 2 UvrB subunits scans DNA for abnormalities. Upon binding of the UvrA(2)B(2) complex to a putative damaged site, the DNA wraps around one UvrB monomer. DNA wrap is dependent on ATP binding by UvrB and probably causes local melting of the DNA helix, facilitating insertion of UvrB beta-hairpin between the DNA strands. Then UvrB probes one DNA strand for the presence of a lesion. If a lesion is found the UvrA subunits dissociate and the UvrB-DNA preincision complex is formed. This complex is subsequently bound by UvrC and the second UvrB is released. If no lesion is found, the DNA wraps around the other UvrB subunit that will check the other stand for damage. This Escherichia fergusonii (strain ATCC 35469 / DSM 13698 / CCUG 18766 / IAM 14443 / JCM 21226 / LMG 7866 / NBRC 102419 / NCTC 12128 / CDC 0568-73) protein is UvrABC system protein B.